We begin with the raw amino-acid sequence, 279 residues long: Calcium-binding protein 4 (279 aa).

Residues 1–12 show a composition bias toward basic and acidic residues; it reads MAEEQGRGRHGP. Positions 1–114 are disordered; it reads MAEEQGRGRH…PGPQHDAAQR (114 aa). A Phosphoserine modification is found at S42. Residues 55–65 are compositionally biased toward polar residues; the sequence is GPSSSGEQTPM. 4 EF-hand domains span residues 133–168, 187–204, 210–245, and 247–279; these read EELD…LGYM, GRVD…KLRE, LGLR…LLGE, and LVGP…LSRH. The Ca(2+) site is built by D146, D148, D150, Y152, and D157. Residues D223, D225, D227, R229, E234, D260, N262, D264, T266, and E271 each coordinate Ca(2+).

Interacts with CACNA1F and CACNA1D (via IQ domain) in a calcium independent manner. Interacts (via N-terminus) with UNC119. In terms of processing, phosphorylated. Phosphorylation levels change with the light conditions and regulate the activity. In terms of tissue distribution, expressed in the retina.

It localises to the cytoplasm. The protein localises to the presynapse. Functionally, may play a role in normal synaptic function, probably through regulation of Ca(2+) influx and neurotransmitter release in photoreceptor synaptic terminals and in auditory transmission. Modulator of CACNA1F, shifting the activation range to more hyperpolarized voltages. The chain is Calcium-binding protein 4 (CABP4) from Bos taurus (Bovine).